Here is a 616-residue protein sequence, read N- to C-terminus: uncharacterized protein (616 aa).

It belongs to the UbiD family.

This is an uncharacterized protein from Helicobacter pylori (strain ATCC 700392 / 26695) (Campylobacter pylori).